A 106-amino-acid polypeptide reads, in one-letter code: L-rhamnose mutarotase (106 aa).

Tyr-20 is a substrate binding site. The Proton donor role is filled by His-24. Substrate contacts are provided by residues Tyr-43 and 78–79 (WW).

It belongs to the rhamnose mutarotase family. Homodimer.

The protein resides in the cytoplasm. The catalysed reaction is alpha-L-rhamnose = beta-L-rhamnose. Its pathway is carbohydrate degradation; L-rhamnose degradation. Its function is as follows. Involved in the anomeric conversion of L-rhamnose. This Rhizobium leguminosarum bv. trifolii protein is L-rhamnose mutarotase (rhaM).